Here is a 238-residue protein sequence, read N- to C-terminus: Ribosomal RNA small subunit methyltransferase G (238 aa).

S-adenosyl-L-methionine-binding positions include Gly77, Phe82, 128–129, and Arg147; that span reads AE.

It belongs to the methyltransferase superfamily. RNA methyltransferase RsmG family.

The protein localises to the cytoplasm. Functionally, specifically methylates the N7 position of guanine in position 535 of 16S rRNA. This chain is Ribosomal RNA small subunit methyltransferase G, found in Exiguobacterium sibiricum (strain DSM 17290 / CCUG 55495 / CIP 109462 / JCM 13490 / 255-15).